The primary structure comprises 124 residues: Small ribosomal subunit protein uS12 (124 aa).

D89 carries the 3-methylthioaspartic acid modification.

This sequence belongs to the universal ribosomal protein uS12 family. In terms of assembly, part of the 30S ribosomal subunit. Contacts proteins S8 and S17. May interact with IF1 in the 30S initiation complex.

Its function is as follows. With S4 and S5 plays an important role in translational accuracy. Interacts with and stabilizes bases of the 16S rRNA that are involved in tRNA selection in the A site and with the mRNA backbone. Located at the interface of the 30S and 50S subunits, it traverses the body of the 30S subunit contacting proteins on the other side and probably holding the rRNA structure together. The combined cluster of proteins S8, S12 and S17 appears to hold together the shoulder and platform of the 30S subunit. The protein is Small ribosomal subunit protein uS12 of Blochmanniella pennsylvanica (strain BPEN).